The primary structure comprises 339 residues: Phenylalanine--tRNA ligase alpha subunit (339 aa).

Glutamate 254 serves as a coordination point for Mg(2+).

Belongs to the class-II aminoacyl-tRNA synthetase family. Phe-tRNA synthetase alpha subunit type 1 subfamily. Tetramer of two alpha and two beta subunits. Mg(2+) serves as cofactor.

It localises to the cytoplasm. The catalysed reaction is tRNA(Phe) + L-phenylalanine + ATP = L-phenylalanyl-tRNA(Phe) + AMP + diphosphate + H(+). In Acetivibrio thermocellus (strain ATCC 27405 / DSM 1237 / JCM 9322 / NBRC 103400 / NCIMB 10682 / NRRL B-4536 / VPI 7372) (Clostridium thermocellum), this protein is Phenylalanine--tRNA ligase alpha subunit.